Here is a 255-residue protein sequence, read N- to C-terminus: MDPIAFSIGGFQIRWYGIMIALGVLAALILANLNCRYKGYNFDSLIDVFLISFPLAIIGARVYYVVFQFQDYRNNLMDIFNIRLGGLAIHGGIIFGLGAAYIVSRYKKMDFIKLWDCFAPSIILGQAIGRWGNFFNGEAHGGIVGYEFISKFPLFIQRGMYINGDYYNPTFLYESLWDLIVCIILVYIFRKKHKRGTVICTYVGLYSLGRFFIEGLRTDSLMIGHIRVAQLVSFIGIVLSISFFVYLKGRGKRVD.

A run of 3 helical transmembrane segments spans residues 15–35 (WYGIMIALGVLAALILANLNC), 46–66 (IDVFLISFPLAIIGARVYYVV), and 84–104 (LGGLAIHGGIIFGLGAAYIVS). An a 1,2-diacyl-sn-glycero-3-phospho-(1'-sn-glycerol)-binding site is contributed by Arg-130. The next 3 membrane-spanning stretches (helical) occupy residues 169-189 (PTFLYESLWDLIVCIILVYIF), 196-216 (GTVICTYVGLYSLGRFFIEGL), and 228-248 (VAQLVSFIGIVLSISFFVYLK).

This sequence belongs to the Lgt family.

The protein resides in the cell membrane. It carries out the reaction L-cysteinyl-[prolipoprotein] + a 1,2-diacyl-sn-glycero-3-phospho-(1'-sn-glycerol) = an S-1,2-diacyl-sn-glyceryl-L-cysteinyl-[prolipoprotein] + sn-glycerol 1-phosphate + H(+). It functions in the pathway protein modification; lipoprotein biosynthesis (diacylglyceryl transfer). Functionally, catalyzes the transfer of the diacylglyceryl group from phosphatidylglycerol to the sulfhydryl group of the N-terminal cysteine of a prolipoprotein, the first step in the formation of mature lipoproteins. The chain is Phosphatidylglycerol--prolipoprotein diacylglyceryl transferase from Clostridium kluyveri (strain NBRC 12016).